The chain runs to 1218 residues: Protein jagged-1 (1218 aa).

An N-terminal signal peptide occupies residues 1 to 33 (MRSPRTRGRPGRPLSLLLALLCALRAKVCGASG). Over 34 to 1067 (QFELEILSMQ…QRRPLKNRTD (1034 aa)) the chain is Extracellular. An N-linked (GlcNAc...) asparagine glycan is attached at N143. The 45-residue stretch at 185 to 229 (VTCDDHYYGFGCNKFCRPRDDFFGHYACDQNGNKTCMEGWMGPDC) folds into the DSL domain. Disulfide bonds link C187/C196 and C200/C212. An important for interaction with NOTCH1 region spans residues 199–207 (FCRPRDDFF). N217 carries N-linked (GlcNAc...) asparagine glycosylation. 40 disulfide bridges follow: C220-C229, C234-C245, C238-C251, C253-C262, C265-C276, C271-C282, C284-C293, C300-C312, C306-C322, C324-C333, C340-C351, C345-C360, C362-C371, C378-C389, C383-C398, C400-C409, C416-C427, C421-C436, C438-C447, C454-C464, C458-C473, C475-C484, C491-C502, C496-C511, C513-C522, C529-C540, C534-C549, C551-C560, C578-C605, C599-C615, C617-C626, C633-C644, C638-C653, C655-C664, C671-C682, C676-C691, C693-C702, C709-C720, C714-C729, and C731-C740. Residues 230–263 (NKAICRQGCSPKHGSCKLPGDCRCQYGWQGLYCD) enclose the EGF-like 1 domain. The EGF-like 2; atypical domain maps to 264 to 294 (KCIPHPGCVHGTCNEPWQCLCETNWGGQLCD). 2 EGF-like domains span residues 296–334 (DLNY…PNCE) and 336–372 (AEHA…PTCS). The region spanning 374–410 (NIDDCSPNNCSHGGTCQDLVNGFKCVCPPQWTGKTCQ) is the EGF-like 5; calcium-binding domain. N382 carries N-linked (GlcNAc...) asparagine glycosylation. Residues 412 to 448 (DANECEAKPCVNARSCKNLIASYYCDCLPGWMGQNCD) form the EGF-like 6; calcium-binding domain. The EGF-like 7; calcium-binding domain maps to 450–485 (NINDCLGQCQNDASCRDLVNGYRCICPPGYAGDHCE). The 37-residue stretch at 487–523 (DIDECASNPCLNGGHCQNEINRFQCLCPTGFSGNLCQ) folds into the EGF-like 8; calcium-binding domain. 2 consecutive EGF-like domains span residues 525-561 (DIDY…KNCS) and 586-627 (DTPE…TYCH). N-linked (GlcNAc...) asparagine glycosylation occurs at N559. Residues 629 to 665 (NINDCESNPCKNGGTCIDGVNSYKCICSDGWEGAHCE) form the EGF-like 11; calcium-binding domain. The 37-residue stretch at 667 to 703 (NINDCSQNPCHYGGTCRDLVNDFYCDCKNGWKGKTCH) folds into the EGF-like 12; calcium-binding domain. EGF-like domains lie at 705–741 (RDSQ…TTCN) and 744–780 (RNSS…PICT). A glycan (N-linked (GlcNAc...) asparagine) is linked at N745. Intrachain disulfides connect C748/C759, C753/C768, C770/C779, C786/C797, C791/C806, C808/C817, C824/C835, C829/C844, and C846/C855. The EGF-like 15; calcium-binding domain maps to 782–818 (NTNDCSPHPCYNSGTCVDGDNWYRCECAPGFAGPDCR). Positions 820–856 (NINECQSSPCAFGATCVDEINGYQCICPPGHSGAKCH) constitute an EGF-like 16; calcium-binding domain. 4 N-linked (GlcNAc...) asparagine glycosylation sites follow: N960, N991, N1045, and N1064. The helical transmembrane segment at 1068–1093 (FLVPLLSSVLTVAWVCCLVTAFYWCV) threads the bilayer. Residues 1094–1218 (RKRRKPSSHT…QSLNRMEYIV (125 aa)) lie on the Cytoplasmic side of the membrane. Residues 1181–1218 (REEKAPSGTPTKHPNWTNKQDNRDLESAQSLNRMEYIV) are disordered. A compositionally biased stretch (polar residues) spans 1188–1199 (GTPTKHPNWTNK).

In terms of assembly, interacts with NOTCH1, NOTCH2 and NOTCH3. As to expression, widely expressed in many tissues, with highest expression in brain, heart, muscle and thymus.

It is found in the membrane. The protein localises to the cell membrane. Its function is as follows. Ligand for multiple Notch receptors and involved in the mediation of Notch signaling. May be involved in cell-fate decisions during hematopoiesis. Seems to be involved in early and late stages of mammalian cardiovascular development. Inhibits myoblast differentiation. May regulate fibroblast growth factor-induced angiogenesis. This Mus musculus (Mouse) protein is Protein jagged-1 (Jag1).